A 313-amino-acid polypeptide reads, in one-letter code: Formimidoylglutamase (313 aa).

Mn(2+) contacts are provided by His-130, Asp-155, His-157, Asp-159, Asp-241, and Asp-243.

The protein belongs to the arginase family. The cofactor is Mn(2+).

It catalyses the reaction N-formimidoyl-L-glutamate + H2O = formamide + L-glutamate. Its pathway is amino-acid degradation; L-histidine degradation into L-glutamate; L-glutamate from N-formimidoyl-L-glutamate (hydrolase route): step 1/1. Catalyzes the conversion of N-formimidoyl-L-glutamate to L-glutamate and formamide. The chain is Formimidoylglutamase from Salmonella schwarzengrund (strain CVM19633).